The primary structure comprises 245 residues: Bis(5'-nucleosyl)-tetraphosphatase PrpE [asymmetrical] (245 aa).

The protein belongs to the PrpE family. Ni(2+) is required as a cofactor.

It catalyses the reaction P(1),P(4)-bis(5'-guanosyl) tetraphosphate + H2O = GMP + GTP + 2 H(+). In terms of biological role, asymmetrically hydrolyzes Ap4p to yield AMP and ATP. The chain is Bis(5'-nucleosyl)-tetraphosphatase PrpE [asymmetrical] from Anoxybacillus flavithermus (strain DSM 21510 / WK1).